The sequence spans 201 residues: MKITAVIALLFSLAAASPIPVADPGVVSVSKSYADFLRVYQSWNTFANPDRPNLKKREFEAAPAKTYADFLRAYQSWNTFVNPDRPNLKKREFEAAPEKSYADFLRAYHSWNTFVNPDRPNLKKREFEAAPAKTYADFLRAYQSWNTFVNPDRPNLKKRTEEDEENEEEDEEYYRFLQFYIMTVPENSTITDVNITAKFES.

An N-terminal signal peptide occupies residues 1 to 20; that stretch reads MKITAVIALLFSLAAASPIP. Propeptides lie at residues 21-31, 58-65, 92-99, 126-133, and 160-201; these read VADPGVVSVSK, EFEAAPAK, EFEAAPEK, and TEED…KFES. N187 and N194 each carry an N-linked (GlcNAc...) asparagine glycan.

Proteolytically cleaved by kpr, probably at the C-terminal side of dibasic Lys-Arg residues. Post-translationally, glycosylated. Most of the precursor molecules are glycosylated on at least one site, but only a small proportion are glycosylated on both sites.

It is found in the secreted. Functionally, in h- cells under nutritional starvation, P-factor induces alteration of cell morphology toward mating, arrest of the cell cycle at the G1 phase prior to the initiation of DNA synthesis and indirect transcriptional activation of the sxa2 gene which down-regulates the signaling pathway. This Schizosaccharomyces pombe (strain 972 / ATCC 24843) (Fission yeast) protein is Pro-P-factor (map2).